A 381-amino-acid chain; its full sequence is Cobalt-precorrin-5B C(1)-methyltransferase (381 aa).

Belongs to the CbiD family.

It catalyses the reaction Co-precorrin-5B + S-adenosyl-L-methionine = Co-precorrin-6A + S-adenosyl-L-homocysteine. The protein operates within cofactor biosynthesis; adenosylcobalamin biosynthesis; cob(II)yrinate a,c-diamide from sirohydrochlorin (anaerobic route): step 6/10. Its function is as follows. Catalyzes the methylation of C-1 in cobalt-precorrin-5B to form cobalt-precorrin-6A. This is Cobalt-precorrin-5B C(1)-methyltransferase from Clostridium botulinum (strain Alaska E43 / Type E3).